A 286-amino-acid polypeptide reads, in one-letter code: Putative transcription factor kapC (286 aa).

Pro residues predominate over residues 1–10 (MQPALAPAPH). The tract at residues 1–120 (MQPALAPAPH…QNRAAQRAFR (120 aa)) is disordered. Low complexity predominate over residues 26 to 40 (HDQLLAAHQHLSHPQ). The span at 41–54 (QPRPQAPATQPPHM) shows a compositional bias: pro residues. Residues 55–67 (QPNTASPRDQNNI) are compositionally biased toward polar residues. The span at 81-92 (PQTPPQPEPAPQ) shows a compositional bias: pro residues. The bZIP domain maps to 102–165 (PLSTSKRAAQ…EYIINLQTRL (64 aa)). Residues 103 to 126 (LSTSKRAAQNRAAQRAFRQRKESY) form a basic motif region. A compositionally biased stretch (low complexity) spans 108 to 118 (RAAQNRAAQRA). The segment at 130 to 161 (LEEQVKHQEAITEEYKALHAENYQLREYIINL) is leucine-zipper. The tract at residues 197-286 (RGNAASAGPA…QEPDGLPVVS (90 aa)) is disordered. Positions 198 to 222 (GNAASAGPAPAGPGPQQSQPNQNQG) are enriched in low complexity.

This sequence belongs to the bZIP family.

Its subcellular location is the nucleus. Functionally, putative transcription factor. In Aspergillus terreus (strain NIH 2624 / FGSC A1156), this protein is Putative transcription factor kapC (kapC).